A 125-amino-acid chain; its full sequence is Large ribosomal subunit protein bL12 (125 aa).

This sequence belongs to the bacterial ribosomal protein bL12 family. As to quaternary structure, homodimer. Part of the ribosomal stalk of the 50S ribosomal subunit. Forms a multimeric L10(L12)X complex, where L10 forms an elongated spine to which 2 to 4 L12 dimers bind in a sequential fashion. Binds GTP-bound translation factors.

Its function is as follows. Forms part of the ribosomal stalk which helps the ribosome interact with GTP-bound translation factors. Is thus essential for accurate translation. The protein is Large ribosomal subunit protein bL12 of Rickettsia africae (strain ESF-5).